A 360-amino-acid chain; its full sequence is Carbamoyl phosphate synthase small chain (360 aa).

The tract at residues 1–169 (MTKRLLILED…TKTAYPAPGI (169 aa)) is CPSase. L-glutamine is bound by residues Ser46, Gly220, and Gly222. Residues 172–358 (NIVLVDFGLK…LEMIDSWRCT (187 aa)) enclose the Glutamine amidotransferase type-1 domain. Residue Cys247 is the Nucleophile of the active site. Residues Met248, Gln251, Asn289, Gly291, and Tyr292 each contribute to the L-glutamine site. Active-site residues include His331 and Asp333.

Belongs to the CarA family. In terms of assembly, composed of two chains; the small (or glutamine) chain promotes the hydrolysis of glutamine to ammonia, which is used by the large (or ammonia) chain to synthesize carbamoyl phosphate. Tetramer of heterodimers (alpha,beta)4.

It carries out the reaction hydrogencarbonate + L-glutamine + 2 ATP + H2O = carbamoyl phosphate + L-glutamate + 2 ADP + phosphate + 2 H(+). The catalysed reaction is L-glutamine + H2O = L-glutamate + NH4(+). Its pathway is amino-acid biosynthesis; L-arginine biosynthesis; carbamoyl phosphate from bicarbonate: step 1/1. It participates in pyrimidine metabolism; UMP biosynthesis via de novo pathway; (S)-dihydroorotate from bicarbonate: step 1/3. Small subunit of the glutamine-dependent carbamoyl phosphate synthetase (CPSase). CPSase catalyzes the formation of carbamoyl phosphate from the ammonia moiety of glutamine, carbonate, and phosphate donated by ATP, constituting the first step of 2 biosynthetic pathways, one leading to arginine and/or urea and the other to pyrimidine nucleotides. The small subunit (glutamine amidotransferase) binds and cleaves glutamine to supply the large subunit with the substrate ammonia. The polypeptide is Carbamoyl phosphate synthase small chain (Streptococcus pyogenes serotype M18 (strain MGAS8232)).